The chain runs to 783 residues: Polyribonucleotide nucleotidyltransferase 1, mitochondrial (783 aa).

A mitochondrion-targeting transit peptide spans 1–45 (MAACRLCCLCPCLRPLGCGPLGRPGRNRALSYLQMRALWSSTGSR). Residues Lys-250, Lys-264, and Lys-285 each carry the N6-acetyllysine modification. Lys-552 carries the N6-succinyllysine modification. The KH domain maps to 605–664 (PVVETVKVPLSKRAKFVGPGGYHLKKLQAETGVTISQVDEETFSIFAPTPTAMHEARDFI). Residues 679 to 750 (GAVYTATITE…ADGRMRLSRK (72 aa)) enclose the S1 motif domain. Ser-754 carries the post-translational modification Phosphoserine.

It belongs to the polyribonucleotide nucleotidyltransferase family. Homotrimer; in free form. Homooligomer. Component of the mitochondrial degradosome (mtEXO) complex which is a heteropentamer containing 2 copies of SUPV3L1 and 3 copies of PNPT1. As part of the mitochondrial degradosome complex, interacts with GRSF1 in an RNA-dependent manner; the interaction enhances the activity of the complex. Interacts with TCL1A; the interaction has no effect on PNPT1 exonuclease activity.

The protein localises to the cytoplasm. It is found in the mitochondrion matrix. The protein resides in the mitochondrion intermembrane space. It carries out the reaction RNA(n+1) + phosphate = RNA(n) + a ribonucleoside 5'-diphosphate. Functionally, RNA-binding protein implicated in numerous RNA metabolic processes. Catalyzes the phosphorolysis of single-stranded polyribonucleotides processively in the 3'-to-5' direction. Mitochondrial intermembrane factor with RNA-processing exoribonulease activity. Component of the mitochondrial degradosome (mtEXO) complex, that degrades 3' overhang double-stranded RNA with a 3'-to-5' directionality in an ATP-dependent manner. Involved in the degradation of non-coding mitochondrial transcripts (MT-ncRNA) and tRNA-like molecules. Required for correct processing and polyadenylation of mitochondrial mRNAs. Plays a role as a cytoplasmic RNA import factor that mediates the translocation of small RNA components, like the 5S RNA, the RNA subunit of ribonuclease P and the mitochondrial RNA-processing (MRP) RNA, into the mitochondrial matrix. Plays a role in mitochondrial morphogenesis and respiration; regulates the expression of the electron transport chain (ETC) components at the mRNA and protein levels. In the cytoplasm, shows a 3'-to-5' exoribonuclease mediating mRNA degradation activity; degrades c-myc mRNA upon treatment with IFNB1/IFN-beta, resulting in a growth arrest in melanoma cells. Regulates the stability of specific mature miRNAs in melanoma cells; specifically and selectively degrades miR-221, preferentially. Also plays a role in RNA cell surveillance by cleaning up oxidized RNAs. Binds to the RNA subunit of ribonuclease P, MRP RNA and miR-221 microRNA. The chain is Polyribonucleotide nucleotidyltransferase 1, mitochondrial (Pnpt1) from Mus musculus (Mouse).